A 462-amino-acid chain; its full sequence is 3-ketoacyl-CoA thiolase 2, peroxisomal (462 aa).

Residues Met1–Cys34 constitute a peroxisome transit peptide. Cys138 serves as the catalytic Acyl-thioester intermediate. Cys138 and Cys192 form a disulfide bridge. Active-site proton acceptor residues include His393 and Cys425.

This sequence belongs to the thiolase-like superfamily. Thiolase family. As to quaternary structure, forms homodimers. As to expression, accumulates in etiolated cotyledons and in seedlings, also present in roots, flowers and siliques (at protein level). High levels in wounded leaves.

The protein resides in the peroxisome. Its subcellular location is the glyoxysome. It carries out the reaction an acyl-CoA + acetyl-CoA = a 3-oxoacyl-CoA + CoA. Its pathway is lipid metabolism; fatty acid metabolism. In terms of biological role, involved in long chain fatty-acid beta-oxidation prior to gluconeogenesis during germination and subsequent seedling growth. Confers sensitivity to 2,4-dichlorophenoxybutiric acid (2,4-DB). Required for local and systemic induction of jasmonic acid (JA) biosynthesis after wounding. Seems to be involved in JA biosynthesis during senescence. May be involved in the positive regulation of abscisic acid-activated signaling pathway. This Arabidopsis thaliana (Mouse-ear cress) protein is 3-ketoacyl-CoA thiolase 2, peroxisomal (PED1).